The following is a 425-amino-acid chain: [Pyruvate dehydrogenase (acetyl-transferring)] kinase, mitochondrial (425 aa).

Phosphohistidine; by autocatalysis is present on His-178. Residues Asn-180–Cys-418 enclose the Histidine kinase domain. Residues Glu-296 to Arg-303, Asp-336, Thr-355 to Thr-356, and Gly-379 to Leu-384 contribute to the ATP site.

The protein belongs to the PDK/BCKDK protein kinase family.

It localises to the mitochondrion matrix. The catalysed reaction is L-seryl-[pyruvate dehydrogenase E1 alpha subunit] + ATP = O-phospho-L-seryl-[pyruvate dehydrogenase E1 alpha subunit] + ADP + H(+). Functionally, inhibits the mitochondrial pyruvate dehydrogenase complex by phosphorylation of the E1 alpha subunit, thus contributing to the regulation of glucose metabolism. This is [Pyruvate dehydrogenase (acetyl-transferring)] kinase, mitochondrial (pkp1) from Schizosaccharomyces pombe (strain 972 / ATCC 24843) (Fission yeast).